The chain runs to 586 residues: IASRMSFSSLKRKQPKTFTVRIVTMDAEMEFNCEMKWKGKDLFDLVCRTLGLRETWFFGLQYTIKDTVAWLKMDKKVLDHDVSKEEPVTFHFLAKFYPENAEEELVQEITQHLFFLQVKKQILDEKVYCPPEASVLLASYAVQAKYGDYDPSVHKRGFLAQEELLPKRVINLYQMTPEMWEERITAWYAEHRGRARDEAEMEYLKIAQDLEMYGVNYFTIRNKKGTELLLGVDALGLHIYDPENRLTPKISFPWNEIRNISYSDKEFTIKPLDKKIDVFKFNSSKLRVNKLILQLCIGNHDLFMRRRKADSLEVQQMKAQAREEKARKQMERQRLAREKQMREEAERSRDEPERRVLHMKEEATMANEALMRSEETADLLAEKAQITEEEAKLLAQKAAEAEQEMQRIKATAIRTEEEKRLMEQKVLEAEVLALKMAEESERRAKEADQLKQDLQEAREAERRAKQKLLEIATKPTYPPMNPIPAPLPPDIPSFDIIGDSLSFDFKDTDMKRLSMEIEKEKVEYMEKSKHLQEQLNELKTEIEALKLKERETALDILHSEHSDSGTSSKHNTIKKPQAQGRRPICI.

The residue at position 9 (serine 9) is a Phosphoserine. The FERM domain maps to 18 to 307; sequence FTVRIVTMDA…GNHDLFMRRR (290 aa). The segment at 325–354 is disordered; the sequence is KARKQMERQRLAREKQMREEAERSRDEPER. Serine 514 is subject to Phosphoserine; by PAK. A disordered region spans residues 557 to 586; that stretch reads LHSEHSDSGTSSKHNTIKKPQAQGRRPICI.

Interacts with NHERF1, HGS and AGAP2. Interacts with SGSM3. Interacts (via FERM domain) with MPP1. Interacts with LAYN and WWC1. Interacts with the CUL4A-RBX1-DDB1-VprBP/DCAF1 E3 ubiquitin-protein ligase complex. The unphosphorylated form interacts (via FERM domain) with VPRBP/DCAF1. Interacts (via FERM domain) with NOP53; the interaction is direct. Interacts with SCHIP1; the interaction is direct. Ubiquitinated by the CUL4A-RBX1-DDB1-DCAF1/VprBP E3 ubiquitin-protein ligase complex for ubiquitination and subsequent proteasome-dependent degradation. In terms of processing, phosphorylation of Ser-514 inhibits nuclear localization by disrupting the intramolecular association of the FERM domain with the C-terminal tail. The dephosphorylation of Ser-514 favors the interaction with NOP53.

The protein resides in the cell membrane. It is found in the cell projection. The protein localises to the cytoplasm. It localises to the cytoskeleton. Its subcellular location is the nucleus. Functionally, probable regulator of the Hippo/SWH (Sav/Wts/Hpo) signaling pathway, a signaling pathway that plays a pivotal role in tumor suppression by restricting proliferation and promoting apoptosis. Along with WWC1 can synergistically induce the phosphorylation of LATS1 and LATS2 and can probably function in the regulation of the Hippo/SWH (Sav/Wts/Hpo) signaling pathway. May act as a membrane stabilizing protein. May inhibit PI3 kinase by binding to AGAP2 and impairing its stimulating activity. Suppresses cell proliferation and tumorigenesis by inhibiting the CUL4A-RBX1-DDB1-VprBP/DCAF1 E3 ubiquitin-protein ligase complex Plays a role in lens development and is required for complete fiber cell terminal differentiation, maintenance of cell polarity and separation of the lens vesicle from the corneal epithelium. In Rattus norvegicus (Rat), this protein is Merlin (Nf2).